Reading from the N-terminus, the 124-residue chain is S-adenosylmethionine decarboxylase proenzyme (124 aa).

The active-site Schiff-base intermediate with substrate; via pyruvic acid is serine 63. Serine 63 is modified (pyruvic acid (Ser); by autocatalysis). Histidine 68 functions as the Proton acceptor; for processing activity in the catalytic mechanism. Catalysis depends on cysteine 83, which acts as the Proton donor; for catalytic activity.

This sequence belongs to the prokaryotic AdoMetDC family. Type 1 subfamily. Heterotetramer of two alpha and two beta chains arranged as a dimer of alpha/beta heterodimers. Pyruvate serves as cofactor. Is synthesized initially as an inactive proenzyme. Formation of the active enzyme involves a self-maturation process in which the active site pyruvoyl group is generated from an internal serine residue via an autocatalytic post-translational modification. Two non-identical subunits are generated from the proenzyme in this reaction, and the pyruvate is formed at the N-terminus of the alpha chain, which is derived from the carboxyl end of the proenzyme. The post-translation cleavage follows an unusual pathway, termed non-hydrolytic serinolysis, in which the side chain hydroxyl group of the serine supplies its oxygen atom to form the C-terminus of the beta chain, while the remainder of the serine residue undergoes an oxidative deamination to produce ammonia and the pyruvoyl group blocking the N-terminus of the alpha chain.

It carries out the reaction S-adenosyl-L-methionine + H(+) = S-adenosyl 3-(methylsulfanyl)propylamine + CO2. The protein operates within amine and polyamine biosynthesis; S-adenosylmethioninamine biosynthesis; S-adenosylmethioninamine from S-adenosyl-L-methionine: step 1/1. Its function is as follows. Catalyzes the decarboxylation of S-adenosylmethionine to S-adenosylmethioninamine (dcAdoMet), the propylamine donor required for the synthesis of the polyamines spermine and spermidine from the diamine putrescine. This Acetivibrio thermocellus (strain ATCC 27405 / DSM 1237 / JCM 9322 / NBRC 103400 / NCIMB 10682 / NRRL B-4536 / VPI 7372) (Clostridium thermocellum) protein is S-adenosylmethionine decarboxylase proenzyme.